We begin with the raw amino-acid sequence, 360 residues long: Phospho-N-acetylmuramoyl-pentapeptide-transferase (360 aa).

Helical transmembrane passes span 27 to 47 (IVSL…LIAW), 72 to 92 (PTMG…MWAY), 94 to 114 (SNPY…VGFI), 132 to 152 (WKYF…YSIG), 168 to 188 (IMPQ…VGTS), 199 to 219 (GLAI…AWAT), 236 to 256 (AGEL…FLWF), 263 to 283 (VFMG…IAVL), 288 to 308 (FLLV…ILQV), and 338 to 358 (VIVR…ATLK).

It belongs to the glycosyltransferase 4 family. MraY subfamily. It depends on Mg(2+) as a cofactor.

The protein localises to the cell inner membrane. The enzyme catalyses UDP-N-acetyl-alpha-D-muramoyl-L-alanyl-gamma-D-glutamyl-meso-2,6-diaminopimeloyl-D-alanyl-D-alanine + di-trans,octa-cis-undecaprenyl phosphate = di-trans,octa-cis-undecaprenyl diphospho-N-acetyl-alpha-D-muramoyl-L-alanyl-D-glutamyl-meso-2,6-diaminopimeloyl-D-alanyl-D-alanine + UMP. It functions in the pathway cell wall biogenesis; peptidoglycan biosynthesis. In terms of biological role, catalyzes the initial step of the lipid cycle reactions in the biosynthesis of the cell wall peptidoglycan: transfers peptidoglycan precursor phospho-MurNAc-pentapeptide from UDP-MurNAc-pentapeptide onto the lipid carrier undecaprenyl phosphate, yielding undecaprenyl-pyrophosphoryl-MurNAc-pentapeptide, known as lipid I. The polypeptide is Phospho-N-acetylmuramoyl-pentapeptide-transferase (Yersinia pestis bv. Antiqua (strain Angola)).